Consider the following 438-residue polypeptide: Protein DJ-1 homolog B (438 aa).

The transit peptide at 1 to 45 (MASSSLCHRYFNKITVTPFFNTKKLHHYSPRRISLRVNRRSFSIS) directs the protein to the chloroplast. PfpI endopeptidase domains are found at residues 53–220 (KKVL…EQLL) and 258–424 (PQIL…EKFY).

Belongs to the peptidase C56 family. As to quaternary structure, homodimer.

It is found in the plastid. The protein resides in the chloroplast. Functionally, may be involved in oxidative stress response. The chain is Protein DJ-1 homolog B (DJ1B) from Arabidopsis thaliana (Mouse-ear cress).